A 494-amino-acid polypeptide reads, in one-letter code: Aspartyl/glutamyl-tRNA(Asn/Gln) amidotransferase subunit B (494 aa).

It belongs to the GatB/GatE family. GatB subfamily. As to quaternary structure, heterotrimer of A, B and C subunits.

It catalyses the reaction L-glutamyl-tRNA(Gln) + L-glutamine + ATP + H2O = L-glutaminyl-tRNA(Gln) + L-glutamate + ADP + phosphate + H(+). The enzyme catalyses L-aspartyl-tRNA(Asn) + L-glutamine + ATP + H2O = L-asparaginyl-tRNA(Asn) + L-glutamate + ADP + phosphate + 2 H(+). In terms of biological role, allows the formation of correctly charged Asn-tRNA(Asn) or Gln-tRNA(Gln) through the transamidation of misacylated Asp-tRNA(Asn) or Glu-tRNA(Gln) in organisms which lack either or both of asparaginyl-tRNA or glutaminyl-tRNA synthetases. The reaction takes place in the presence of glutamine and ATP through an activated phospho-Asp-tRNA(Asn) or phospho-Glu-tRNA(Gln). This chain is Aspartyl/glutamyl-tRNA(Asn/Gln) amidotransferase subunit B, found in Synechococcus sp. (strain CC9605).